The primary structure comprises 871 residues: MADTIKHTPMMQQYLAVKADYPNQLLFYRMGDFYELFYEDAVKASELLEITLTARGKSGGNPIPMAGIPHHSAEGYLAKLVKLGQSVAICEQIGDPSISKGPVERKVVRVITPGTLVEDALLEDKSENLLAAIFQQADEYGLATLDVASGRFEATLLPDSTQLSAEVERLKPAEIILPDDPLFKQNLPESIQNRPGLVDYPSWHFEKDSCRKRLIDHFGTQDLVAFGCDQLPAVISAAGVILHYAQSMLQNTLAHVFSLQTYQADDALALDAMSRRNLELDTNLTGGKNHTLFAILDNATTAMGSRLMNRWLNQPLRNRDIINDRFNAIEDIIEQHSQEEFRSALKPIGDLERILSRVSLYSARPRDILHLGRSLNQLPELQALLKQQTANKWQQLSKQLGLYPELASQLETALVESPPMLMRDGGVFAEGYDSELDELRNLKNQAGDYLLALEAREKERTGITTLKVGYNRVHGYYIEVSKLQSDNVPADYVRRQTLKAQERYITPELKEFEDKVLSANEKALAREKWLYQQLLERLNQDLQALQRTAAALAETDVLVSLARQAINLNLTRPTLSSEPGIDIKQGRHLTVEALSNQPFIPNDTCFDEQRRLQIITGPNMGGKSTFMRQTALIAIMAYMGSFVPAESATLGPIDRIFTRIGASDDLTSGRSTFMVEMTETANILHHASPESLILMDEVGRGTSTFDGLALAWAIAEQMAQSIQGYCLFATHYFELTTLVEQFNNTVNIHLSAIEHQDKIVFMHQVEEGPASQSYGLQVAALAGVPTAVIDKAKKHLHRLENQTAAQQQTSGTASSAKESVQQFDLFAQPALPEAIETMLTDLKALSVDDLTPRQALEKLYEVTNTVKNASE.

617–624 (GPNMGGKS) provides a ligand contact to ATP.

Belongs to the DNA mismatch repair MutS family.

Its function is as follows. This protein is involved in the repair of mismatches in DNA. It is possible that it carries out the mismatch recognition step. This protein has a weak ATPase activity. This is DNA mismatch repair protein MutS from Hydrogenovibrio crunogenus (strain DSM 25203 / XCL-2) (Thiomicrospira crunogena).